The chain runs to 145 residues: Small ribosomal subunit protein eS19 (145 aa).

Residue Lys23 is modified to N6-acetyllysine. Omega-N-methylarginine is present on Arg67. Residues Lys111 and Lys115 each carry the N6-acetyllysine modification. An N6-succinyllysine modification is found at Lys143.

It belongs to the eukaryotic ribosomal protein eS19 family. As to quaternary structure, component of the small ribosomal subunit. Part of the small subunit (SSU) processome, composed of more than 70 proteins and the RNA chaperone small nucleolar RNA (snoRNA) U3. Interacts with RPS19BP1.

It localises to the cytoplasm. It is found in the nucleus. The protein resides in the nucleolus. Its function is as follows. Component of the small ribosomal subunit. The ribosome is a large ribonucleoprotein complex responsible for the synthesis of proteins in the cell. Required for pre-rRNA processing and maturation of 40S ribosomal subunits. Part of the small subunit (SSU) processome, first precursor of the small eukaryotic ribosomal subunit. During the assembly of the SSU processome in the nucleolus, many ribosome biogenesis factors, an RNA chaperone and ribosomal proteins associate with the nascent pre-rRNA and work in concert to generate RNA folding, modifications, rearrangements and cleavage as well as targeted degradation of pre-ribosomal RNA by the RNA exosome. This Rattus norvegicus (Rat) protein is Small ribosomal subunit protein eS19 (Rps19).